The chain runs to 132 residues: NLP effector protein 15 (132 aa).

The Conserved undecapeptide motif I signature appears at Met1 to Asp9. Positions Gly16–Glu22 match the Hepta-peptide GHRHDWE motif II motif.

This sequence belongs to the Necrosis inducing protein (NPP1) family.

It is found in the secreted. Secreted effector that contributes moderately to virulence during infection by P.capsici. Causes only small yellow areas at 3 days after inoculation of host C.annuum leaves; these areas expand somewhat and became necrotic at 7 days after inoculation. Leads only to chlorotic areas, without necrosis at 7 days after non-host N.benthamiana leaves infection. In Phytophthora capsici, this protein is NLP effector protein 15.